We begin with the raw amino-acid sequence, 351 residues long: DNA polymerase IV (351 aa).

One can recognise a UmuC domain in the interval 4 to 185 (IIHIDMDCFY…LPLRKIPGVG (182 aa)). Mg(2+) contacts are provided by D8 and D103. E104 is an active-site residue.

It belongs to the DNA polymerase type-Y family. As to quaternary structure, monomer. Requires Mg(2+) as cofactor.

Its subcellular location is the cytoplasm. It catalyses the reaction DNA(n) + a 2'-deoxyribonucleoside 5'-triphosphate = DNA(n+1) + diphosphate. In terms of biological role, poorly processive, error-prone DNA polymerase involved in untargeted mutagenesis. Copies undamaged DNA at stalled replication forks, which arise in vivo from mismatched or misaligned primer ends. These misaligned primers can be extended by PolIV. Exhibits no 3'-5' exonuclease (proofreading) activity. May be involved in translesional synthesis, in conjunction with the beta clamp from PolIII. This Photorhabdus laumondii subsp. laumondii (strain DSM 15139 / CIP 105565 / TT01) (Photorhabdus luminescens subsp. laumondii) protein is DNA polymerase IV.